Here is an 872-residue protein sequence, read N- to C-terminus: Metabotropic glutamate receptor 2 (872 aa).

An N-terminal signal peptide occupies residues 1 to 18 (MESLLRFLALLLLRGAVA). At 19-568 (EGPAKKVLTL…EYIRWGDAWA (550 aa)) the chain is on the extracellular side. Cys-50 and Cys-92 form a disulfide bridge. The L-glutamate site is built by Arg-57, Arg-61, Ser-145, Ala-166, and Thr-168. 2 N-linked (GlcNAc...) asparagine glycosylation sites follow: Asn-203 and Asn-286. Disulfide bonds link Cys-234/Cys-518, Cys-355/Cys-362, Cys-400/Cys-407, Cys-500/Cys-519, Cys-504/Cys-522, Cys-525/Cys-537, and Cys-540/Cys-553. Asp-295 serves as a coordination point for L-glutamate. N-linked (GlcNAc...) asparagine glycosylation occurs at Asn-338. Lys-377 lines the L-glutamate pocket. Asn-402 carries N-linked (GlcNAc...) asparagine glycosylation. A glycan (N-linked (GlcNAc...) asparagine) is linked at Asn-547. A helical transmembrane segment spans residues 569-589 (VGPVTIACLGALATLFVLGVF). Residues 590–604 (VRHNATPVVKASGRE) lie on the Cytoplasmic side of the membrane. Residues 605-625 (LCYILLGGVFLCYCMTFIFIA) traverse the membrane as a helical segment. Residues 626–633 (KPSTAVCT) lie on the Extracellular side of the membrane. An intrachain disulfide couples Cys-632 to Cys-721. A helical transmembrane segment spans residues 634 to 651 (LRRLGLGTAFSVCYSALL). Residues 652 to 679 (TKTNRIARIFGGAREGAQRPRFISPASQ) lie on the Cytoplasmic side of the membrane. Residues 677–685 (ASQVAICLA) form an important for interaction with HTR2A region. A helical transmembrane segment spans residues 680-700 (VAICLALISGQLLIVAAWLVV). The Extracellular portion of the chain corresponds to 701-726 (EAPGIGKETAPERREVVTLRCNHRDA). The chain crosses the membrane as a helical span at residues 727 to 747 (SMLGSLAYNVLLIALCTLYAF). Residues 748–760 (KTRKCPENFNEAK) lie on the Cytoplasmic side of the membrane. A helical membrane pass occupies residues 761 to 781 (FIGFTMYTTCIIWLAFLPIFY). Residues 782-798 (VTSSDYRVQTTTMCVSV) are Extracellular-facing. The chain crosses the membrane as a helical span at residues 799-819 (SLSGSVVLGCLFAPKLHIILF). Residues 820 to 872 (QPQKNVVSHRAPTSRFGSAAPRASANLGQGSGSQLVPTVCNGREVVDSTTSSL) lie on the Cytoplasmic side of the membrane.

The protein belongs to the G-protein coupled receptor 3 family. In terms of assembly, forms heterodimers with GRM3 or GRM4. Interacts with GNAI1. Interacts with TAMALIN. Interacts with HTR2A. In terms of tissue distribution, detected in neurons in brain cortex (at protein level).

The protein localises to the cell membrane. Its subcellular location is the synapse. It is found in the cell projection. The protein resides in the dendrite. Its function is as follows. Dimeric G protein-coupled receptor which is activated by the excitatory neurotransmitter L-glutamate. Plays critical roles in modulating synaptic transmission and neuronal excitability. Upon activation by glutamate, inhibits presynaptic calcium channels, reducing further glutamate release and dampening excitatory signaling. Mechanistically, ligand binding causes a conformation change that triggers signaling via guanine nucleotide-binding proteins (G proteins) and modulates the activity of down-stream effectors, such as adenylate cyclase. May mediate suppression of neurotransmission or may be involved in synaptogenesis or synaptic stabilization. This chain is Metabotropic glutamate receptor 2 (Grm2), found in Mus musculus (Mouse).